Consider the following 200-residue polypeptide: NADH-quinone oxidoreductase subunit C (200 aa).

The protein belongs to the complex I 30 kDa subunit family. As to quaternary structure, NDH-1 is composed of 14 different subunits. Subunits NuoB, C, D, E, F, and G constitute the peripheral sector of the complex.

It localises to the cell inner membrane. The enzyme catalyses a quinone + NADH + 5 H(+)(in) = a quinol + NAD(+) + 4 H(+)(out). Its function is as follows. NDH-1 shuttles electrons from NADH, via FMN and iron-sulfur (Fe-S) centers, to quinones in the respiratory chain. The immediate electron acceptor for the enzyme in this species is believed to be ubiquinone. Couples the redox reaction to proton translocation (for every two electrons transferred, four hydrogen ions are translocated across the cytoplasmic membrane), and thus conserves the redox energy in a proton gradient. The sequence is that of NADH-quinone oxidoreductase subunit C from Burkholderia multivorans (strain ATCC 17616 / 249).